We begin with the raw amino-acid sequence, 361 residues long: Protein SGT1 homolog (361 aa).

3 TPR repeats span residues 3–36 (ASDLESKAKEAFVDDDFELAAELYTQAIDAGPAT), 37–70 (ADLYADRAQAHIKLGNYTEAVADANKAIGLDPTM), and 71–104 (HKAYYRKGAACIKLEEYQTAKAALELGSSYAPGD). Phosphothreonine is present on Thr150. In terms of domain architecture, CS spans 159–248 (KPKYRHDYYN…AEQVTWTTLD (90 aa)). The interval 255-295 (AIPQKISTPAETAPRPSYPSSKSKKDWDKLEAEVKKEEKEE) is disordered. Position 262 is a phosphothreonine (Thr262). Residues 271-361 (SYPSSKSKKD…DGMELKKWEI (91 aa)) enclose the SGS domain. The span at 277 to 295 (SKKDWDKLEAEVKKEEKEE) shows a compositional bias: basic and acidic residues.

The protein belongs to the SGT1 family. In terms of processing, constitutively phosphorylated at Thr-262 and phosphorylated at Thr-150 upon infection with the fungal pathogen Ustilago maydis.

It is found in the cytoplasm. The protein localises to the nucleus. May act as positive regulator of basal defense. May be involved in basal disease resistance to the fungal pathogen Ustilago maydis. The chain is Protein SGT1 homolog from Zea mays (Maize).